Reading from the N-terminus, the 598-residue chain is UvrABC system protein C (598 aa).

Residues 13–92 form the GIY-YIG domain; sequence SSPGVYLMKD…IKKYQPRYNV (80 aa). A UVR domain is found at 206–241; sequence DTTIANLEEAIKKASQEHKFEHAAALYRTLTLIRQT.

Belongs to the UvrC family. As to quaternary structure, interacts with UvrB in an incision complex.

The protein localises to the cytoplasm. The UvrABC repair system catalyzes the recognition and processing of DNA lesions. UvrC both incises the 5' and 3' sides of the lesion. The N-terminal half is responsible for the 3' incision and the C-terminal half is responsible for the 5' incision. This Chlamydia muridarum (strain MoPn / Nigg) protein is UvrABC system protein C.